A 150-amino-acid chain; its full sequence is Ribosomal RNA large subunit methyltransferase H (150 aa).

Residues Ile71, Ala100, and 118-123 (LSEMTF) contribute to the S-adenosyl-L-methionine site.

Belongs to the RNA methyltransferase RlmH family. As to quaternary structure, homodimer.

It is found in the cytoplasm. It catalyses the reaction pseudouridine(1915) in 23S rRNA + S-adenosyl-L-methionine = N(3)-methylpseudouridine(1915) in 23S rRNA + S-adenosyl-L-homocysteine + H(+). In terms of biological role, specifically methylates the pseudouridine at position 1915 (m3Psi1915) in 23S rRNA. The polypeptide is Ribosomal RNA large subunit methyltransferase H (Helicobacter acinonychis (strain Sheeba)).